A 197-amino-acid polypeptide reads, in one-letter code: MTQSKNKVVIFLGPPGAGKGTQAERLAREQNLAKISTGDILRDHVARGTALGQRVKPILDAGQLVPDDILIALIRDRLAGMEPVRVIFDGFPRTCAQAEALDMLLEELGAPVSAVPLLEVPDETLIERIVERGRQAALRGEPVRSDDTEEVARRRQQVYREQTQPLIDYYAARGHLQHVNGVGTPDEVYNRILQVVR.

16-21 (GAGKGT) is a binding site for ATP. Residues 36–65 (STGDILRDHVARGTALGQRVKPILDAGQLV) are NMP. Residues threonine 37, arginine 42, 63-65 (QLV), 90-93 (GFPR), and glutamine 97 contribute to the AMP site. The LID stretch occupies residues 131–147 (ERGRQAALRGEPVRSDD). ATP is bound at residue arginine 132. Residues arginine 144 and arginine 155 each coordinate AMP. Glycine 183 is an ATP binding site.

The protein belongs to the adenylate kinase family. In terms of assembly, monomer.

The protein resides in the cytoplasm. The enzyme catalyses AMP + ATP = 2 ADP. It participates in purine metabolism; AMP biosynthesis via salvage pathway; AMP from ADP: step 1/1. Catalyzes the reversible transfer of the terminal phosphate group between ATP and AMP. Plays an important role in cellular energy homeostasis and in adenine nucleotide metabolism. The chain is Adenylate kinase from Deinococcus geothermalis (strain DSM 11300 / CIP 105573 / AG-3a).